Here is a 441-residue protein sequence, read N- to C-terminus: Ribulose bisphosphate carboxylase large chain (441 aa).

Lys-5 is subject to N6,N6,N6-trimethyllysine. Substrate is bound by residues Asn-114 and Thr-164. The Proton acceptor role is filled by Lys-166. A substrate-binding site is contributed by Lys-168. Positions 192, 194, and 195 each coordinate Mg(2+). Lys-192 carries the post-translational modification N6-carboxylysine. His-285 (proton acceptor) is an active-site residue. Substrate contacts are provided by Arg-286, His-318, and Ser-370.

This sequence belongs to the RuBisCO large chain family. Type I subfamily. In terms of assembly, heterohexadecamer of 8 large chains and 8 small chains; disulfide-linked. The disulfide link is formed within the large subunit homodimers. The cofactor is Mg(2+). In terms of processing, the disulfide bond which can form in the large chain dimeric partners within the hexadecamer appears to be associated with oxidative stress and protein turnover.

It localises to the plastid. The protein resides in the chloroplast. It catalyses the reaction 2 (2R)-3-phosphoglycerate + 2 H(+) = D-ribulose 1,5-bisphosphate + CO2 + H2O. The catalysed reaction is D-ribulose 1,5-bisphosphate + O2 = 2-phosphoglycolate + (2R)-3-phosphoglycerate + 2 H(+). In terms of biological role, ruBisCO catalyzes two reactions: the carboxylation of D-ribulose 1,5-bisphosphate, the primary event in carbon dioxide fixation, as well as the oxidative fragmentation of the pentose substrate in the photorespiration process. Both reactions occur simultaneously and in competition at the same active site. The protein is Ribulose bisphosphate carboxylase large chain of Pellaea rotundifolia (Button fern).